The chain runs to 408 residues: Neutral cholesterol ester hydrolase 1 (408 aa).

Residues 1 to 4 (MRSS) are Cytoplasmic-facing. A helical; Signal-anchor for type II membrane protein transmembrane segment spans residues 5-25 (CVLLAALLALAAYYVYIPLPS). Residues 26–408 (AVSDPWKLML…SYIKWLDQNL (383 aa)) are Lumenal-facing. The short motif at 113–115 (HGG) is the Involved in the stabilization of the negatively charged intermediate by the formation of the oxyanion hole element. Ser-191 is a catalytic residue. N-linked (GlcNAc...) asparagine glycosylation is present at Asn-270. Asp-348 is a catalytic residue. Asn-367 carries N-linked (GlcNAc...) asparagine glycosylation. The active site involves His-378. An N-linked (GlcNAc...) asparagine glycan is attached at Asn-389.

This sequence belongs to the 'GDXG' lipolytic enzyme family. In terms of processing, N-glycosylated. As to expression, present in brain, heart, kidney, lung, spinal cord and testis but not liver (at protein level). Expressed in peritoneal macrophages and kidney.

The protein resides in the cell membrane. It localises to the microsome. The catalysed reaction is a 1-O-alkyl-2-acetyl-sn-glycerol + H2O = a 1-O-alkyl-sn-glycerol + acetate + H(+). It carries out the reaction 1-O-hexadecyl-2-acetyl-sn-glycerol + H2O = 1-O-hexadecyl-sn-glycerol + acetate + H(+). It catalyses the reaction a cholesterol ester + H2O = cholesterol + a fatty acid + H(+). The enzyme catalyses cholesteryl (9Z-octadecenoate) + H2O = cholesterol + (9Z)-octadecenoate + H(+). Inhibited by bulky trifluoromethyl ketones. Functionally, hydrolyzes 2-acetyl monoalkylglycerol ether (1-O-alkyl-2-acetyl-sn-glycerol), the penultimate precursor of the pathway for de novo synthesis of platelet-activating factor. May be responsible for the hydrolysis of cholesterol esters (such as cholesteryl (9Z-octadecenoate)) in macrophages. Also involved in organ detoxification by hydrolyzing exogenous organophosphorus compounds. This Mus musculus (Mouse) protein is Neutral cholesterol ester hydrolase 1 (Nceh1).